The chain runs to 641 residues: Isomalto-dextranase (641 aa).

A signal peptide (tat-type signal) is located at residues 1-39 (MMNLSRRTLLTTGSAATLAYALGMAGSAQAATAVTARPG). D227 (nucleophile) is an active-site residue. D288 acts as the Proton donor in catalysis. The CBM6 domain occupies 500–640 (TRYPAAFAAW…AINLNWIELD (141 aa)). The disordered stretch occupies residues 556-588 (SGYRYANATDDNTTSKTTTKKANPEKADRSTVD). Residues 561–576 (ANATDDNTTSKTTTKK) show a composition bias toward low complexity. Residues 577-586 (ANPEKADRST) are compositionally biased toward basic and acidic residues.

The protein belongs to the glycosyl hydrolase 27 family. Predicted to be exported by the Tat system. The position of the signal peptide cleavage has been experimentally proven.

The protein resides in the secreted. It carries out the reaction Hydrolysis of (1-&gt;6)-alpha-D-glucosidic linkages in polysaccharides, to remove successive isomaltose units from the non-reducing ends of the chains.. The chain is Isomalto-dextranase (imd) from Arthrobacter globiformis.